A 237-amino-acid chain; its full sequence is Type II secretion system protein J (237 aa).

The propeptide at Met1–Gly6 is leader sequence. N-methylphenylalanine is present on Phe7. A helical transmembrane segment spans residues Phe7–Met29. The interval Pro203–Glu237 is disordered. The span at Gln212 to Gly224 shows a compositional bias: gly residues. Pro residues predominate over residues Pro226–Glu237.

Belongs to the GSP J family. As to quaternary structure, type II secretion is composed of four main components: the outer membrane complex, the inner membrane complex, the cytoplasmic secretion ATPase and the periplasm-spanning pseudopilus. Forms the tip of the type II pseudopilus by interacting with XcpV, XcpU and XcpX. Interacts with core component XcpT. Post-translationally, cleaved by prepilin peptidase. Methylated by prepilin peptidase at the amino group of the N-terminal phenylalanine once the leader sequence is cleaved by prepilin peptidase.

It localises to the cell inner membrane. Its function is as follows. Component of the type II secretion system required for the energy-dependent secretion of extracellular factors such as proteases and toxins from the periplasm. Part of the pseudopilus tip complex that is critical for the recognition and binding of secretion substrates. Type II pseudopilus confers increased bacterial adhesive capabilities. This chain is Type II secretion system protein J (xcpW), found in Pseudomonas aeruginosa (strain ATCC 15692 / DSM 22644 / CIP 104116 / JCM 14847 / LMG 12228 / 1C / PRS 101 / PAO1).